A 456-amino-acid chain; its full sequence is Argininosuccinate lyase (456 aa).

Belongs to the lyase 1 family. Argininosuccinate lyase subfamily.

The protein localises to the cytoplasm. It catalyses the reaction 2-(N(omega)-L-arginino)succinate = fumarate + L-arginine. It participates in amino-acid biosynthesis; L-arginine biosynthesis; L-arginine from L-ornithine and carbamoyl phosphate: step 3/3. The sequence is that of Argininosuccinate lyase from Listeria monocytogenes serotype 4b (strain F2365).